A 451-amino-acid chain; its full sequence is UDP-glycosyltransferase 76E11 (451 aa).

Residues Ser273, Ala332–Gln334, His349–Glu357, and Ser371–Gln374 contribute to the UDP-alpha-D-glucose site.

Belongs to the UDP-glycosyltransferase family.

Possesses low quercetin 3-O-glucosyltransferase and 7-O-glucosyltransferase activities in vitro. This is UDP-glycosyltransferase 76E11 (UGT76E11) from Arabidopsis thaliana (Mouse-ear cress).